A 452-amino-acid chain; its full sequence is mRNA export factor ICP27 homolog (452 aa).

The disordered stretch occupies residues 42 to 164 (EAIGSTPGED…RNDQTHDESY (123 aa)). Positions 98-107 (SNHHGGRDVE) are enriched in basic and acidic residues. A compositionally biased stretch (basic residues) spans 129-144 (SRKHRDRSLSNRRRRP). Basic and acidic residues predominate over residues 154–164 (ERNDQTHDESY). Zn(2+) is bound by residues cysteine 335, histidine 417, cysteine 421, and cysteine 426. The segment at 335 to 426 (CLLLNRDNDL…HQRECGRVEC (92 aa)) adopts a CHC2-type zinc-finger fold.

It belongs to the HHV-1 ICP27 protein family. In terms of assembly, homodimer. Homodimerization is required for transactivation. Associates in a complex with RNA, and host export factors NXF1/TAP and ALYREF; these interactions allow nuclear export of viral transcripts. Interacts with three host shuttling SR proteins SRSF1, SRSF3 and SRSF7. Interacts with host SRPK1. Interacts with IE62; this interaction enhances IE62 transactivation. Phosphorylated in vitro by SRPK1.

It is found in the host cytoplasm. It localises to the host nucleus. Functionally, multifunctional regulator of the expression of viral genes that mediates nuclear export of viral intronless mRNAs. This immediate early (EI) protein promotes the nuclear export of viral intronless mRNAs by interacting with mRNAs and host NXF1/TAP. The polypeptide is mRNA export factor ICP27 homolog (Varicella-zoster virus (strain Dumas) (HHV-3)).